A 131-amino-acid chain; its full sequence is Small ribosomal subunit protein eS17 (131 aa).

It belongs to the eukaryotic ribosomal protein eS17 family.

This is Small ribosomal subunit protein eS17 (RpS17) from Drosophila melanogaster (Fruit fly).